Here is a 107-residue protein sequence, read N- to C-terminus: Large ribosomal subunit protein bL21 (107 aa).

It belongs to the bacterial ribosomal protein bL21 family. As to quaternary structure, part of the 50S ribosomal subunit. Contacts protein L20.

This protein binds to 23S rRNA in the presence of protein L20. This is Large ribosomal subunit protein bL21 from Chlamydia trachomatis serovar L2 (strain ATCC VR-902B / DSM 19102 / 434/Bu).